Reading from the N-terminus, the 445-residue chain is Scarecrow-like protein 18 (445 aa).

The segment covering 1–21 (MLTSFKSSSSSSEDATATTTE) has biased composition (low complexity). The disordered stretch occupies residues 1 to 26 (MLTSFKSSSSSSEDATATTTENPPPL). A GRAS domain is found at 32–445 (SAATSASHHL…RPLFSVSSWK (414 aa)). Residues 39 to 127 (HHLRRLLFTA…STVFTSSVCK (89 aa)) are leucine repeat I (LRI). The segment at 146 to 217 (YLWLNQLTPF…SPPPSLRITG (72 aa)) is VHIID. The VHIID motif lies at 179 to 183 (LHILD). The segment at 227–259 (RTGDRLTRFADSLGLQFQFHTLVIVEEDLAGLL) is leucine repeat II (LRII). The tract at residues 275–366 (IAVNCVHFLH…QRWFGKEILD (92 aa)) is PFYRE. The tract at residues 369–445 (AAEETERKQR…RPLFSVSSWK (77 aa)) is SAW.

Belongs to the GRAS family. As to expression, expressed in roots and flowers.

It is found in the nucleus. Its function is as follows. Probable transcription factor required for axillary (lateral) shoot meristem formation during vegetative development. Seems to act upstream of REVOLUTA. This Arabidopsis thaliana (Mouse-ear cress) protein is Scarecrow-like protein 18 (SCL18).